We begin with the raw amino-acid sequence, 279 residues long: 1D-myo-inositol 2-acetamido-2-deoxy-alpha-D-glucopyranoside deacetylase (279 aa).

The Zn(2+) site is built by His-12, Asp-15, and His-146.

Belongs to the MshB deacetylase family. The cofactor is Zn(2+).

It catalyses the reaction 1D-myo-inositol 2-acetamido-2-deoxy-alpha-D-glucopyranoside + H2O = 1D-myo-inositol 2-amino-2-deoxy-alpha-D-glucopyranoside + acetate. In terms of biological role, catalyzes the deacetylation of 1D-myo-inositol 2-acetamido-2-deoxy-alpha-D-glucopyranoside (GlcNAc-Ins) in the mycothiol biosynthesis pathway. The polypeptide is 1D-myo-inositol 2-acetamido-2-deoxy-alpha-D-glucopyranoside deacetylase (Mycobacteroides abscessus (strain ATCC 19977 / DSM 44196 / CCUG 20993 / CIP 104536 / JCM 13569 / NCTC 13031 / TMC 1543 / L948) (Mycobacterium abscessus)).